Consider the following 389-residue polypeptide: Alkanesulfonate monooxygenase (389 aa).

The protein belongs to the SsuD family.

The enzyme catalyses an alkanesulfonate + FMNH2 + O2 = an aldehyde + FMN + sulfite + H2O + 2 H(+). In terms of biological role, catalyzes the desulfonation of aliphatic sulfonates. The protein is Alkanesulfonate monooxygenase of Agrobacterium fabrum (strain C58 / ATCC 33970) (Agrobacterium tumefaciens (strain C58)).